The following is a 4568-amino-acid chain: Dynein heavy chain, cytoplasmic (4568 aa).

The stem stretch occupies residues 1-1826 (MDSGNESSII…VVKMANSQFF (1826 aa)). Coiled coils occupy residues 587–652 (QTRL…VLGK), 814–844 (KLAETVNTYQERCEELLNVVRIVNADLNVLK), 1241–1274 (QEALNVITAFEAKLNKLTEERNKMRKARVALDLS), 1324–1340 (RKIRQSLDELMNQLKQL), and 1559–1591 (VNMQGAQRLLERLADMLAKIQKALGEYLERERS). AAA stretches follow at residues 1827–2049 (YGFE…VLVS), 2118–2394 (QQLS…PTPQ), 2498–2747 (EIES…WVRG), and 2842–3111 (GFYE…GHRV). ATP is bound by residues 1865–1872 (GPAGTGKT), 2163–2170 (GSSGSGKT), 2537–2544 (GPPGSGKT), and 2880–2887 (GTAGAGKT). Coiled coils occupy residues 3132 to 3229 (EKRS…AQVE), 3339 to 3432 (ARAQ…RDRW), and 3707 to 3739 (NSVIETLEKLKNEAAEVAQKSAETDKVMAEVDA). The interval 3132–3432 (EKRSDLEEEK…SSLRSERDRW (301 aa)) is stalk. AAA regions lie at residues 3496 to 3725 (LSTV…EVAQ) and 3954 to 4169 (AHRV…TLDA). Residues 4359-4386 (QLLKDIRRDLNEISAVCRAEKKQNNETR) adopt a coiled-coil conformation.

The protein belongs to the dynein heavy chain family. Consists of at least two heavy chains and a number of intermediate and light chains.

The protein localises to the cytoplasm. Its subcellular location is the cytoskeleton. Functionally, cytoplasmic dynein acts as a motor for the intracellular retrograde motility of vesicles and organelles along microtubules. Dynein has ATPase activity; the force-producing power stroke is thought to occur on release of ADP. May play a role in nuclear migration in hypodermal precursor cells. May be involved in the transport of synaptic vesicle components towards the axon of the DA motor neuron. This function may involve the regulation of dynein by pct-1 and/or cdk-5. Involved in the formation of synapses in the dorsal region during synaptic remodeling of DD motor neurons. Required for anterograde trafficking of dense-core vesicles in the DB motor neuron dendrites. Required for the formation of dendritic branches of PVD sensory neurons. May also play a role in GABAergic synaptic vesicle localization in the ventral nerve cord. May play a role in the pairing of homologous chromosomes during meiosis. The polypeptide is Dynein heavy chain, cytoplasmic (Caenorhabditis elegans).